A 626-amino-acid chain; its full sequence is Serine/threonine-protein kinase ATG1a (626 aa).

Residues 10-268 (YALGPRIGSG…FREFFNHMFL (259 aa)) form the Protein kinase domain. ATP is bound by residues 16-24 (IGSGSFAVV) and Lys39. Asp132 (proton acceptor) is an active-site residue. Polar residues predominate over residues 288-308 (KSLLPSAQPSTSTNRFKSSAE). The tract at residues 288-347 (KSLLPSAQPSTSTNRFKSSAENVHKHGSSSSASNSQISMPHTSFEKTRKDTEGQCSSNQS) is disordered. Low complexity predominate over residues 315–325 (SSSSASNSQIS). Over residues 330 to 339 (SFEKTRKDTE) the composition is skewed to basic and acidic residues. Positions 360 to 363 (YVLV) match the AIM (Atg8-family-interacting motif) motif.

This sequence belongs to the protein kinase superfamily. Ser/Thr protein kinase family. In terms of assembly, interacts with ATG13A. Interacts with ATG8E. Binds to ATG8E on autophagic vesicles. Phosphorylated during nutrient starvation. Dephosphorylated in nutrient-rich conditions.

It is found in the cytoplasmic vesicle. Its subcellular location is the autophagosome. Its function is as follows. Serine/threonine protein kinase involved in autophagy in a nutritional condition-dependent manner. The ATG1-ATG13 protein kinase complex regulates downstream events required for autophagosome enclosure and/or vacuolar delivery. Becomes a target of autophagy under nutrient starvation. Connects autophagy to plant nutritional status. This Arabidopsis thaliana (Mouse-ear cress) protein is Serine/threonine-protein kinase ATG1a.